A 302-amino-acid chain; its full sequence is Cuticle collagen 40 (302 aa).

Disordered stretches follow at residues 79–103 and 119–302; these read RIKRDTRSRRGGYAEGGAAAGGGGG and AGAP…APGY. The segment covering 91–103 has biased composition (gly residues); sequence YAEGGAAAGGGGG. Triple-helical region regions lie at residues 114–143, 162–185, 189–221, 226–252, and 255–290; these read GAAGPAGAPGKDGAPGEDGKAGNPGTAGSD, GPAGPAGGPGPAGPPGPAGADGNT, GGEGPAGPPGPPGPAGNPGTDGAPGNPGAPGQV, GTPGPAGAAGPPGPPGPAGNPGSAGAS, and GPAGPAGDAGPDGAPGNAGAPGAPGEAGAPGSGGGC. Low complexity predominate over residues 137–154; that stretch reads PGTAGSDAEAAAAPTASD. Over residues 194-203 the composition is skewed to pro residues; it reads AGPPGPPGPA. Low complexity-rich tracts occupy residues 205 to 234 and 245 to 281; these read NPGTDGAPGNPGAPGQVTETPGTPGPAGAA and NPGSAGASEPGPAGPAGDAGPDGAPGNAGAPGAPGEA. The segment covering 293–302 has biased composition (pro residues); the sequence is CPPPRTAPGY.

The protein belongs to the cuticular collagen family. As to quaternary structure, collagen polypeptide chains are complexed within the cuticle by disulfide bonds and other types of covalent cross-links.

In terms of biological role, nematode cuticles are composed largely of collagen-like proteins. The cuticle functions both as an exoskeleton and as a barrier to protect the worm from its environment. This chain is Cuticle collagen 40 (col-40), found in Caenorhabditis elegans.